Here is a 151-residue protein sequence, read N- to C-terminus: Probable calcium-binding protein CML31 (151 aa).

4 consecutive EF-hand domains span residues 14 to 42, 44 to 79, 84 to 119, and 120 to 151; these read ALFA…TLGE, VSDE…AEVE, RRGT…LGSD, and QDID…MMNA. The Ca(2+) site is built by D20, D22, D24, R26, E31, D57, D59, D61, and E68. The Ca(2+) site is built by D133, N135, D137, and E144.

Its function is as follows. Potential calcium sensor. This chain is Probable calcium-binding protein CML31 (CML31), found in Oryza sativa subsp. japonica (Rice).